A 149-amino-acid chain; its full sequence is Potassium binding protein Kbp (149 aa).

In terms of domain architecture, BON spans 23 to 91; it reads DKDDQAKKVQ…SVDDQVKTAT (69 aa). In terms of domain architecture, LysM spans 97–146; it reads QFYTVKSGDTLSAISKQVYGNANLYNKIFEANKPMLKSPDKIYPGQVLRI.

It is found in the cytoplasm. Functionally, highly specific potassium binding protein that is required for normal growth in the presence of high levels of external K(+). May act as a sensor of cytoplasmic K(+) concentration. The polypeptide is Potassium binding protein Kbp (Escherichia coli O6:H1 (strain CFT073 / ATCC 700928 / UPEC)).